We begin with the raw amino-acid sequence, 287 residues long: Shikimate kinase (287 aa).

87–97 (PLASGLKSSSA) contributes to the ATP binding site.

Belongs to the GHMP kinase family. Archaeal shikimate kinase subfamily.

The protein resides in the cytoplasm. It catalyses the reaction shikimate + ATP = 3-phosphoshikimate + ADP + H(+). Its pathway is metabolic intermediate biosynthesis; chorismate biosynthesis; chorismate from D-erythrose 4-phosphate and phosphoenolpyruvate: step 5/7. The sequence is that of Shikimate kinase from Methanococcoides burtonii (strain DSM 6242 / NBRC 107633 / OCM 468 / ACE-M).